Consider the following 390-residue polypeptide: Telobox protein 1 (390 aa).

Residues Glu-30–Lys-57 form a disordered region. The span at Pro-32–Pro-48 shows a compositional bias: basic and acidic residues. 2 consecutive HTH myb-type domains span residues Lys-50–Tyr-109 and Ser-135–Tyr-193. The segment at residues Trp-78–Leu-105 is a DNA-binding region (H-T-H motif). Residues Asn-115 to Phe-143 form a disordered region. The H-T-H motif DNA-binding region spans Trp-162–Phe-189. 2 stretches are compositionally biased toward polar residues: residues Ser-244–Pro-257 and Ile-322–Gln-340. Disordered regions lie at residues Ser-244–Gln-278 and Gln-316–Gly-390. Residues Pro-347–Pro-360 show a composition bias toward low complexity.

Its subcellular location is the nucleus. In terms of biological role, general transcription factor with prominent roles in controlling histone levels and stability. Binds and regulates the activities of many promoters, including those controlling the expression of all four types of canonical histones. Is also involved in the centromeric loading of cnp1 and maintenance of centromere identity. Moreover, regulates the expression of cdc2, a protease capable of histone clipping. This Schizosaccharomyces pombe (strain 972 / ATCC 24843) (Fission yeast) protein is Telobox protein 1.